Reading from the N-terminus, the 275-residue chain is 4,5-DOPA dioxygenase extradiol 1 (275 aa).

Residues histidine 22, histidine 60, histidine 182, and histidine 236 each contribute to the Zn(2+) site.

Belongs to the DODA-type extradiol aromatic ring-opening dioxygenase family. The cofactor is Zn(2+).

It carries out the reaction L-dopa + O2 = 4-(L-alanin-3-yl)-2-hydroxy-cis,cis-muconate 6-semialdehyde + H(+). It participates in pigment biosynthesis; betalain biosynthesis. Opens the cyclic ring of dihydroxy-phenylalanine (DOPA) between carbons 4 and 5, thus producing an unstable seco-DOPA that rearranges nonenzymatically to betalamic acid. The sequence is that of 4,5-DOPA dioxygenase extradiol 1 from Beta vulgaris (Sugar beet).